The following is a 210-amino-acid chain: Probable GTP-binding protein EngB (210 aa).

Residues 30-204 form the EngB-type G domain; sequence QGYEVAFAGR…YRVLADWMEL (175 aa). GTP-binding positions include 38-45, 64-68, 82-85, 149-152, and 182-185; these read GRSNAGKS, GRTQL, DLPG, TKAD, and LFSA. The Mg(2+) site is built by S45 and T66.

It belongs to the TRAFAC class TrmE-Era-EngA-EngB-Septin-like GTPase superfamily. EngB GTPase family. The cofactor is Mg(2+).

Functionally, necessary for normal cell division and for the maintenance of normal septation. This Pseudomonas putida (strain ATCC 47054 / DSM 6125 / CFBP 8728 / NCIMB 11950 / KT2440) protein is Probable GTP-binding protein EngB.